Here is a 275-residue protein sequence, read N- to C-terminus: Ribosomal RNA small subunit methyltransferase A (275 aa).

S-adenosyl-L-methionine is bound by residues Asn-20, Leu-22, Gly-47, Glu-68, Asp-90, and Asn-110.

Belongs to the class I-like SAM-binding methyltransferase superfamily. rRNA adenine N(6)-methyltransferase family. RsmA subfamily.

Its subcellular location is the cytoplasm. It catalyses the reaction adenosine(1518)/adenosine(1519) in 16S rRNA + 4 S-adenosyl-L-methionine = N(6)-dimethyladenosine(1518)/N(6)-dimethyladenosine(1519) in 16S rRNA + 4 S-adenosyl-L-homocysteine + 4 H(+). Functionally, specifically dimethylates two adjacent adenosines (A1518 and A1519) in the loop of a conserved hairpin near the 3'-end of 16S rRNA in the 30S particle. May play a critical role in biogenesis of 30S subunits. This is Ribosomal RNA small subunit methyltransferase A from Chlorobaculum tepidum (strain ATCC 49652 / DSM 12025 / NBRC 103806 / TLS) (Chlorobium tepidum).